The following is a 379-amino-acid chain: Probable purine permease 11 (379 aa).

The next 10 membrane-spanning stretches (helical) occupy residues tryptophan 43–leucine 63, tryptophan 76–leucine 96, isoleucine 114–valine 134, tyrosine 144–alanine 164, phenylalanine 167–leucine 187, isoleucine 203–methionine 223, valine 239–phenylalanine 259, valine 294–valine 313, isoleucine 314–phenylalanine 330, and methionine 334–tyrosine 354.

The protein belongs to the purine permeases (TC 2.A.7.14) family. As to quaternary structure, may form a complex with the potassium channel subunit KAT1.

The protein resides in the membrane. The polypeptide is Probable purine permease 11 (PUP11) (Arabidopsis thaliana (Mouse-ear cress)).